The sequence spans 351 residues: Signal recognition particle receptor FtsY (351 aa).

GTP is bound by residues 156–163 (GINGTGKT), 238–242 (DTAGR), and 302–305 (TKLD).

It belongs to the GTP-binding SRP family. FtsY subfamily. Part of the signal recognition particle protein translocation system, which is composed of SRP and FtsY. SRP is a ribonucleoprotein composed of Ffh and a 4.5S RNA molecule.

The protein localises to the cell membrane. Its subcellular location is the cytoplasm. The catalysed reaction is GTP + H2O = GDP + phosphate + H(+). In terms of biological role, involved in targeting and insertion of nascent membrane proteins into the cytoplasmic membrane. Acts as a receptor for the complex formed by the signal recognition particle (SRP) and the ribosome-nascent chain (RNC). Interaction with SRP-RNC leads to the transfer of the RNC complex to the Sec translocase for insertion into the membrane, the hydrolysis of GTP by both Ffh and FtsY, and the dissociation of the SRP-FtsY complex into the individual components. The protein is Signal recognition particle receptor FtsY of Buchnera aphidicola subsp. Schizaphis graminum (strain Sg).